Consider the following 176-residue polypeptide: Small ribosomal subunit protein uS5 (176 aa).

Residues 11-74 (LSEVLVDVNR…QAAKKRMMKV (64 aa)) form the S5 DRBM domain.

It belongs to the universal ribosomal protein uS5 family. In terms of assembly, part of the 30S ribosomal subunit. Contacts proteins S4 and S8.

Functionally, with S4 and S12 plays an important role in translational accuracy. Located at the back of the 30S subunit body where it stabilizes the conformation of the head with respect to the body. The protein is Small ribosomal subunit protein uS5 of Rickettsia peacockii (strain Rustic).